Consider the following 139-residue polypeptide: Putative pre-16S rRNA nuclease (139 aa).

The protein belongs to the YqgF nuclease family.

Its subcellular location is the cytoplasm. Its function is as follows. Could be a nuclease involved in processing of the 5'-end of pre-16S rRNA. This chain is Putative pre-16S rRNA nuclease, found in Streptococcus suis (strain 98HAH33).